A 334-amino-acid chain; its full sequence is GTP 3',8-cyclase (334 aa).

A Radical SAM core domain is found at glycine 11 to alanine 236. Arginine 20 serves as a coordination point for GTP. Residues cysteine 27 and cysteine 31 each coordinate [4Fe-4S] cluster. Tyrosine 33 is a binding site for S-adenosyl-L-methionine. Cysteine 34 is a binding site for [4Fe-4S] cluster. Arginine 69 lines the GTP pocket. An S-adenosyl-L-methionine-binding site is contributed by glycine 73. Threonine 100 is a GTP binding site. S-adenosyl-L-methionine is bound at residue serine 124. Lysine 161 is a GTP binding site. Residue methionine 195 participates in S-adenosyl-L-methionine binding. [4Fe-4S] cluster is bound by residues cysteine 260 and cysteine 263. Arginine 265 to arginine 267 is a binding site for GTP. Cysteine 277 lines the [4Fe-4S] cluster pocket.

The protein belongs to the radical SAM superfamily. MoaA family. In terms of assembly, monomer and homodimer. Requires [4Fe-4S] cluster as cofactor.

It carries out the reaction GTP + AH2 + S-adenosyl-L-methionine = (8S)-3',8-cyclo-7,8-dihydroguanosine 5'-triphosphate + 5'-deoxyadenosine + L-methionine + A + H(+). The protein operates within cofactor biosynthesis; molybdopterin biosynthesis. Its function is as follows. Catalyzes the cyclization of GTP to (8S)-3',8-cyclo-7,8-dihydroguanosine 5'-triphosphate. The polypeptide is GTP 3',8-cyclase (Pseudomonas putida (strain GB-1)).